Reading from the N-terminus, the 224-residue chain is 7-cyano-7-deazaguanine synthase 1 (224 aa).

Leu10–Ala20 contacts ATP. Residues Cys189, Cys199, Cys202, and Cys205 each coordinate Zn(2+).

This sequence belongs to the QueC family. It depends on Zn(2+) as a cofactor.

The catalysed reaction is 7-carboxy-7-deazaguanine + NH4(+) + ATP = 7-cyano-7-deazaguanine + ADP + phosphate + H2O + H(+). Its pathway is purine metabolism; 7-cyano-7-deazaguanine biosynthesis. Catalyzes the ATP-dependent conversion of 7-carboxy-7-deazaguanine (CDG) to 7-cyano-7-deazaguanine (preQ(0)). This chain is 7-cyano-7-deazaguanine synthase 1, found in Sphingopyxis alaskensis (strain DSM 13593 / LMG 18877 / RB2256) (Sphingomonas alaskensis).